The following is a 248-amino-acid chain: Glycoprotein BILF2 (248 aa).

Residues M1–A17 form the signal peptide. Residues F19–A125 form the Ig-like domain. 12 N-linked (GlcNAc...) asparagine; by host glycosylation sites follow: N27, N37, N45, N73, N83, N92, N95, N104, N116, N121, N131, and N144. A disulfide bridge connects residues C40 and C115. The segment at V167–V191 is disordered. Residues H175–H188 are compositionally biased toward basic residues. A helical transmembrane segment spans residues W210 to S230.

Belongs to the Epstein-Barr virus BILF2 protein family.

The protein resides in the membrane. This Epstein-Barr virus (strain B95-8) (HHV-4) protein is Glycoprotein BILF2.